The primary structure comprises 432 residues: Adenylosuccinate synthetase (432 aa).

GTP contacts are provided by residues 12–18 (GDEGKGK) and 40–42 (GHT). Residue aspartate 13 is the Proton acceptor of the active site. Residues aspartate 13 and glycine 40 each contribute to the Mg(2+) site. IMP-binding positions include 13–16 (DEGK), 38–41 (NAGH), threonine 130, arginine 144, glutamine 225, threonine 240, and arginine 304. Histidine 41 acts as the Proton donor in catalysis. 300–306 (ATTGRPR) is a binding site for substrate. GTP is bound by residues arginine 306, 332-334 (KLD), and 414-416 (SVG).

This sequence belongs to the adenylosuccinate synthetase family. In terms of assembly, homodimer. The cofactor is Mg(2+).

The protein localises to the cytoplasm. The enzyme catalyses IMP + L-aspartate + GTP = N(6)-(1,2-dicarboxyethyl)-AMP + GDP + phosphate + 2 H(+). Its pathway is purine metabolism; AMP biosynthesis via de novo pathway; AMP from IMP: step 1/2. Plays an important role in the de novo pathway of purine nucleotide biosynthesis. Catalyzes the first committed step in the biosynthesis of AMP from IMP. The polypeptide is Adenylosuccinate synthetase (Anaeromyxobacter dehalogenans (strain 2CP-1 / ATCC BAA-258)).